The sequence spans 189 residues: Peptidyl-tRNA hydrolase (189 aa).

Tyr15 lines the tRNA pocket. Residue His20 is the Proton acceptor of the active site. TRNA is bound by residues Tyr65, Asn67, and Asn113.

It belongs to the PTH family. As to quaternary structure, monomer.

It is found in the cytoplasm. It catalyses the reaction an N-acyl-L-alpha-aminoacyl-tRNA + H2O = an N-acyl-L-amino acid + a tRNA + H(+). Functionally, hydrolyzes ribosome-free peptidyl-tRNAs (with 1 or more amino acids incorporated), which drop off the ribosome during protein synthesis, or as a result of ribosome stalling. Catalyzes the release of premature peptidyl moieties from peptidyl-tRNA molecules trapped in stalled 50S ribosomal subunits, and thus maintains levels of free tRNAs and 50S ribosomes. The chain is Peptidyl-tRNA hydrolase from Caldicellulosiruptor bescii (strain ATCC BAA-1888 / DSM 6725 / KCTC 15123 / Z-1320) (Anaerocellum thermophilum).